A 412-amino-acid polypeptide reads, in one-letter code: CCA-adding enzyme (412 aa).

ATP-binding residues include Ser41 and Lys44. Residues Ser41 and Lys44 each coordinate CTP. 3 residues coordinate Mg(2+): Asp53, Asp55, and Asp106. Positions 129, 149, and 158 each coordinate ATP. Residues His129, Lys149, and Tyr158 each contribute to the CTP site.

The protein belongs to the tRNA nucleotidyltransferase/poly(A) polymerase family. Archaeal CCA-adding enzyme subfamily. Homodimer. Mg(2+) is required as a cofactor.

The enzyme catalyses a tRNA precursor + 2 CTP + ATP = a tRNA with a 3' CCA end + 3 diphosphate. It catalyses the reaction a tRNA with a 3' CCA end + 2 CTP + ATP = a tRNA with a 3' CCACCA end + 3 diphosphate. In terms of biological role, catalyzes the addition and repair of the essential 3'-terminal CCA sequence in tRNAs without using a nucleic acid template. Adds these three nucleotides in the order of C, C, and A to the tRNA nucleotide-73, using CTP and ATP as substrates and producing inorganic pyrophosphate. tRNA 3'-terminal CCA addition is required both for tRNA processing and repair. Also involved in tRNA surveillance by mediating tandem CCA addition to generate a CCACCA at the 3' terminus of unstable tRNAs. While stable tRNAs receive only 3'-terminal CCA, unstable tRNAs are marked with CCACCA and rapidly degraded. This is CCA-adding enzyme from Saccharolobus solfataricus (strain ATCC 35092 / DSM 1617 / JCM 11322 / P2) (Sulfolobus solfataricus).